Consider the following 232-residue polypeptide: Zinc finger protein RTS2 (232 aa).

The C2H2-type zinc finger occupies 24–48 (YYCQICQRQCKDANGFQSHNKSPSH). Disordered stretches follow at residues 180 to 199 (AKRQTEKVYQPEMKSEISGD) and 211 to 232 (GNGRVNKKKKKVPPRKDGIKFR).

It is found in the nucleus. The chain is Zinc finger protein RTS2 (RTS2) from Saccharomyces cerevisiae (strain ATCC 204508 / S288c) (Baker's yeast).